The sequence spans 419 residues: MAPK/MAK/MRK overlapping kinase (419 aa).

The 282-residue stretch at 4-285 (YKAIGKIGEG…AHQALQHPYF (282 aa)) folds into the Protein kinase domain. ATP is bound by residues 10–18 (IGEGTFSEV) and Lys-33. Asp-128 (proton acceptor) is an active-site residue. 2 disordered regions span residues 285 to 344 (FQEQ…RGPA) and 390 to 419 (PASK…KGGR). Composition is skewed to basic and acidic residues over residues 322–338 (KEGR…EDRP) and 393–402 (KKTDPQKDLK).

This sequence belongs to the protein kinase superfamily. CMGC Ser/Thr protein kinase family. CDC2/CDKX subfamily. The cofactor is Mg(2+). Autophosphorylated. In terms of tissue distribution, expressed in heart, brain, lung, kidney, and pancreas, and at very low levels in placenta, liver and skeletal muscle. Detected in retina.

Its subcellular location is the cytoplasm. The protein localises to the cell projection. It localises to the cilium. It is found in the nucleus. It carries out the reaction L-seryl-[protein] + ATP = O-phospho-L-seryl-[protein] + ADP + H(+). The enzyme catalyses L-threonyl-[protein] + ATP = O-phospho-L-threonyl-[protein] + ADP + H(+). Its activity is regulated as follows. Phosphorylation appears to increase the enzymatic activity. Its function is as follows. Able to phosphorylate several exogenous substrates and to undergo autophosphorylation. Negatively regulates cilium length in a cAMP and mTORC1 signaling-dependent manner. The sequence is that of MAPK/MAK/MRK overlapping kinase (MOK) from Homo sapiens (Human).